Consider the following 698-residue polypeptide: Transferrin-binding protein B (698 aa).

The signal sequence occupies residues 1–20 (MNNPLVNQAAMVLPVFLLSA). Cys-21 is lipidated: N-palmitoyl cysteine. Residue Cys-21 is the site of S-diacylglycerol cysteine attachment. Disordered stretches follow at residues 33 to 58 (VDTE…QKDQ), 83 to 102 (IKLS…KNPS), 294 to 324 (FSGK…SLSG), 349 to 383 (GSAK…SENS), 428 to 479 (ESGK…GDAN), and 669 to 698 (TKNA…KPVQ). Polar residues predominate over residues 46–56 (DVSSEKPQAQK). Residues 299 to 315 (EATDKPKNDGETKEHPF) show a composition bias toward basic and acidic residues. The segment covering 369–383 (AAASNGAAGTSSENS) has biased composition (low complexity). Over residues 460–476 (QAGTAENGNPAASNTAG) the composition is skewed to polar residues. The segment covering 671 to 686 (NATDASGNGNSASSAT) has biased composition (low complexity).

It belongs to the TbpB family. As to quaternary structure, binds only human holo-transferrin (TF), via the TF C-terminus. Forms a large complex with TbpA and TF. Interacts via its C-terminal domain with Slam1.

It localises to the cell outer membrane. Its subcellular location is the cell surface. Neisseria acquires iron by extracting it from serum transferrin (TF) in its human host. Acts as a TF receptor and is required for TF utilization. Involved in the initial capture of TF. Helps select only those TF molecules that can be used as an iron source and concentrates them on the cell surface, maintaining the iron-loaded status of the TF C-terminal lobe until its delivery to TbpA. This Neisseria meningitidis serogroup A / serotype 4A (strain DSM 15465 / Z2491) protein is Transferrin-binding protein B.